A 320-amino-acid chain; its full sequence is Formimidoylglutamase (320 aa).

Residues His125, Asp153, His155, Asp157, Asp244, and Asp246 each coordinate Mn(2+).

The protein belongs to the arginase family. Mn(2+) is required as a cofactor.

It catalyses the reaction N-formimidoyl-L-glutamate + H2O = formamide + L-glutamate. Its pathway is amino-acid degradation; L-histidine degradation into L-glutamate; L-glutamate from N-formimidoyl-L-glutamate (hydrolase route): step 1/1. In terms of biological role, catalyzes the conversion of N-formimidoyl-L-glutamate to L-glutamate and formamide. The polypeptide is Formimidoylglutamase (Rhodococcus jostii (strain RHA1)).